Here is a 107-residue protein sequence, read N- to C-terminus: Circadian clock oscillator protein KaiB (107 aa).

The protein belongs to the KaiB family. May undergo a major conformational rearrangment; in the free state forms homooligomers. When bound to KaiC switches to a monomeric thioredoxin-fold (KaiB(fs)). The active oscillator complex is probably KaiC(6):KaiB(6).

Functionally, component of the KaiBC clock protein complex, which constitutes the main circadian regulator in cyanobacteria; it may modify the ATPase activity of KaiC. Its function is as follows. May be a metamorphic protein which reversibly switches between an inactive tetrameric fold and a rare, thioredoxin-like monomeric fold (KaiB(fs)). KaiB(fs) binds phospho-KaiC, and perhaps clock output effectors. This Prochlorococcus marinus (strain NATL2A) protein is Circadian clock oscillator protein KaiB.